Consider the following 195-residue polypeptide: Shikimate kinase (195 aa).

21 to 26 lines the ATP pocket; the sequence is GTGKTS. Threonine 25 is a binding site for Mg(2+). The substrate site is built by aspartate 43, arginine 67, and glycine 89. Residues 128-148 form a disordered region; it reads REQRPSFSGKASTEISEETMR. Residue arginine 131 participates in ATP binding. Over residues 132-141 the composition is skewed to polar residues; the sequence is PSFSGKASTE. Arginine 158 is a substrate binding site.

Belongs to the shikimate kinase family. As to quaternary structure, monomer. Mg(2+) is required as a cofactor.

It is found in the cytoplasm. The enzyme catalyses shikimate + ATP = 3-phosphoshikimate + ADP + H(+). The protein operates within metabolic intermediate biosynthesis; chorismate biosynthesis; chorismate from D-erythrose 4-phosphate and phosphoenolpyruvate: step 5/7. Its function is as follows. Catalyzes the specific phosphorylation of the 3-hydroxyl group of shikimic acid using ATP as a cosubstrate. This chain is Shikimate kinase, found in Syntrophus aciditrophicus (strain SB).